A 227-amino-acid chain; its full sequence is Heptaprenylglyceryl phosphate synthase (227 aa).

Lys13 contacts sn-glycerol 1-phosphate. Residues Asp15 and Thr41 each contribute to the Mg(2+) site. Residues 159-164 (YLEYSG), Gly189, and 209-210 (GN) contribute to the sn-glycerol 1-phosphate site.

It belongs to the GGGP/HepGP synthase family. Group I subfamily. In terms of assembly, homodimer. Mg(2+) is required as a cofactor.

The enzyme catalyses sn-glycerol 1-phosphate + all-trans-heptaprenyl diphosphate = 3-heptaprenyl-sn-glycero-1-phosphate + diphosphate. The protein operates within membrane lipid metabolism; glycerophospholipid metabolism. Functionally, prenyltransferase that catalyzes in vivo the transfer of the heptaprenyl moiety of heptaprenyl pyrophosphate (HepPP; 35 carbon atoms) to the C3 hydroxyl of sn-glycerol-1-phosphate (G1P), producing heptaprenylglyceryl phosphate (HepGP). This reaction is an ether-bond-formation step in the biosynthesis of archaea-type G1P-based membrane lipids found in Bacillales. The polypeptide is Heptaprenylglyceryl phosphate synthase (Exiguobacterium sibiricum (strain DSM 17290 / CCUG 55495 / CIP 109462 / JCM 13490 / 255-15)).